Reading from the N-terminus, the 359-residue chain is Nicotinate-nucleotide--dimethylbenzimidazole phosphoribosyltransferase (359 aa).

Glutamate 318 serves as the catalytic Proton acceptor.

Belongs to the CobT family. Homodimer.

The catalysed reaction is 5,6-dimethylbenzimidazole + nicotinate beta-D-ribonucleotide = alpha-ribazole 5'-phosphate + nicotinate + H(+). It functions in the pathway nucleoside biosynthesis; alpha-ribazole biosynthesis; alpha-ribazole from 5,6-dimethylbenzimidazole: step 1/2. Catalyzes the synthesis of alpha-ribazole-5'-phosphate from nicotinate mononucleotide (NAMN) and 5,6-dimethylbenzimidazole (DMB). The sequence is that of Nicotinate-nucleotide--dimethylbenzimidazole phosphoribosyltransferase from Escherichia coli (strain SMS-3-5 / SECEC).